The sequence spans 181 residues: Ribulose bisphosphate carboxylase small subunit 3B, chloroplastic (181 aa).

A chloroplast-targeting transit peptide spans 1–54; it reads MASSMLSSAAVVTSPAQATMVAPFTGLKSSAAFPVTRKTNKDITSIASNGGRVS.

This sequence belongs to the RuBisCO small chain family. Heterohexadecamer of 8 large and 8 small subunits.

The protein localises to the plastid. The protein resides in the chloroplast. Its function is as follows. RuBisCO catalyzes two reactions: the carboxylation of D-ribulose 1,5-bisphosphate, the primary event in carbon dioxide fixation, as well as the oxidative fragmentation of the pentose substrate. Both reactions occur simultaneously and in competition at the same active site. Although the small subunit is not catalytic it is essential for maximal activity. This is Ribulose bisphosphate carboxylase small subunit 3B, chloroplastic (RBCS-3B) from Arabidopsis thaliana (Mouse-ear cress).